We begin with the raw amino-acid sequence, 328 residues long: Interleukin-12 subunit beta (328 aa).

A signal peptide spans 1–22; that stretch reads MCHQQLVISWFSLVFLASPLMA. The Ig-like C2-type domain maps to 29-106; sequence DVYVVELDWY…LSHSLLLLHK (78 aa). A disulfide bridge links C50 with C90. N-linked (GlcNAc...) asparagine glycans are attached at residues N125, N135, N222, and N303. The Fibronectin type-III domain occupies 237–328; that stretch reads PPKNLQLKPL…WSEWASVPCS (92 aa).

This sequence belongs to the IL-12B family. As to quaternary structure, heterodimer with IL12A; disulfide-linked. The heterodimer is known as interleukin IL-12. Heterodimer with IL23A; disulfide-linked. The heterodimer is known as interleukin IL-23. Also secreted as a monomer. Interacts with NBR1; this interaction promotes IL-12 secretion.

It localises to the secreted. Cytokine that can act as a growth factor for activated T and NK cells, enhance the lytic activity of NK/lymphokine-activated killer cells, and stimulate the production of IFN-gamma by resting PBMC. Its function is as follows. Associates with IL23A to form the IL-23 interleukin, a heterodimeric cytokine which functions in innate and adaptive immunity. IL-23 may constitute with IL-17 an acute response to infection in peripheral tissues. IL-23 binds to a heterodimeric receptor complex composed of IL12RB1 and IL23R, activates the Jak-Stat signaling cascade, stimulates memory rather than naive T-cells and promotes production of pro-inflammatory cytokines. IL-23 induces autoimmune inflammation and thus may be responsible for autoimmune inflammatory diseases and may be important for tumorigenesis. The polypeptide is Interleukin-12 subunit beta (IL12B) (Papio anubis (Olive baboon)).